The primary structure comprises 306 residues: Ribosomal protein L11 methyltransferase (306 aa).

The S-adenosyl-L-methionine site is built by Thr-139, Gly-173, Asp-195, and Asn-242.

The protein belongs to the methyltransferase superfamily. PrmA family.

It is found in the cytoplasm. The catalysed reaction is L-lysyl-[protein] + 3 S-adenosyl-L-methionine = N(6),N(6),N(6)-trimethyl-L-lysyl-[protein] + 3 S-adenosyl-L-homocysteine + 3 H(+). Its function is as follows. Methylates ribosomal protein L11. The sequence is that of Ribosomal protein L11 methyltransferase from Trichormus variabilis (strain ATCC 29413 / PCC 7937) (Anabaena variabilis).